The sequence spans 409 residues: Potassium channel subfamily K member 3 (409 aa).

Residues 1–8 lie on the Cytoplasmic side of the membrane; that stretch reads MKRQNVRT. A helical transmembrane segment spans residues 9-29; it reads LALIVCTFTYLLVGAAVFDAL. A glycan (N-linked (GlcNAc...) asparagine) is linked at asparagine 53. The pore-forming intramembrane region spans 78–101; the sequence is WRFAGSFYFAITVITTIGYGHAAP. Residues 108–128 form a helical membrane-spanning segment; sequence VFCMFYALLGIPLTLVMFQSL. Residues 129 to 158 are Cytoplasmic-facing; sequence GERINTFVRYLLHRAKRGLGMRHAEVSMAN. The helical transmembrane segment at 159–179 threads the bilayer; sequence MVLIGFVSCISTLCIGAAAFS. The segment at residues 184 to 207 is an intramembrane region (pore-forming); the sequence is WTFFQAYYYCFITLTTIGFGDYVA. The helical transmembrane segment at 223–243 threads the bilayer; the sequence is FSFVYILTGLTVIGAFLNLVV. Topologically, residues 244-409 are cytoplasmic; that stretch reads LRFMTMNAED…RGLMKRRSSV (166 aa).

This sequence belongs to the two pore domain potassium channel (TC 1.A.1.8) family. Homodimer. Heterodimer with KCNK1. Heterodimer with KCNK9. Very strong expression in heart, also detected in kidney, brain, skin, testis, lung, skeletal muscle, small intestine and stomach. Not detected in liver, thymus or spleen. Expressed in adrenal glands mainly in zona glomerulosa and zona fasciculata of the cortex. Expressed at higher levels in brown and beige than in white adipocytes.

The protein resides in the cell membrane. It carries out the reaction K(+)(in) = K(+)(out). The enzyme catalyses Na(+)(in) = Na(+)(out). With respect to regulation, activated by halothane and isoflurane. Inhibited by external acidification, diacylglycerol and anandamide. Inactivated by barium. Its function is as follows. K(+) channel that conducts voltage-dependent outward rectifying currents upon membrane depolarization. Voltage sensing is coupled to K(+) electrochemical gradient in an 'ion flux gating' mode where outward but not inward ion flow opens the gate. Changes ion selectivity and becomes permeable to Na(+) ions in response to extracellular acidification. Protonation of the pH sensor His-98 stabilizes C-type inactivation conformation likely converting the channel from outward K(+)-conducting, to inward Na(+)-conducting to nonconductive state. Homo- and heterodimerizes to form functional channels with distinct regulatory and gating properties. Allows K(+) currents with fast-gating kinetics important for the repolarization and hyperpolarization phases of action potentials. In cerebellar granule cells, heteromeric KCNK3:KCNK9 channel may hyperpolarize the resting membrane potential to limit intrinsic neuronal excitability, but once the action potential threshold is reached, it may support high-frequency action potential firing and increased neuronal excitability. Dispensable for central chemosensory respiration i.e. breathing controlled by brainstem CO2/pH, it rather conducts pH-sensitive currents and controls the firing rate of serotonergic raphe neurons involved in potentiation of the respiratory chemoreflex. Additionally, imparts chemosensitivity to type 1 cells in carotid bodies which respond to a decrease in arterial oxygen pressure or an increase in carbon dioxide pressure or pH to initiate adaptive changes in pulmonary ventilation. In adrenal gland, contributes to the maintenance of a hyperpolarized resting membrane potential of aldosterone-producing cells at zona glomerulosa and limits aldosterone release as part of a regulatory mechanism that controls arterial blood pressure and electrolyte homeostasis. In brown adipocytes, mediates K(+) efflux that counteracts norepinephrine-induced membrane depolarization, limits Ca(2+) efflux and downstream cAMP and PKA signaling, ultimately attenuating lipid oxidation and adaptive thermogenesis. The sequence is that of Potassium channel subfamily K member 3 from Mus musculus (Mouse).